Consider the following 95-residue polypeptide: Aspartyl/glutamyl-tRNA(Asn/Gln) amidotransferase subunit C (95 aa).

It belongs to the GatC family. As to quaternary structure, heterotrimer of A, B and C subunits.

The catalysed reaction is L-glutamyl-tRNA(Gln) + L-glutamine + ATP + H2O = L-glutaminyl-tRNA(Gln) + L-glutamate + ADP + phosphate + H(+). It carries out the reaction L-aspartyl-tRNA(Asn) + L-glutamine + ATP + H2O = L-asparaginyl-tRNA(Asn) + L-glutamate + ADP + phosphate + 2 H(+). In terms of biological role, allows the formation of correctly charged Asn-tRNA(Asn) or Gln-tRNA(Gln) through the transamidation of misacylated Asp-tRNA(Asn) or Glu-tRNA(Gln) in organisms which lack either or both of asparaginyl-tRNA or glutaminyl-tRNA synthetases. The reaction takes place in the presence of glutamine and ATP through an activated phospho-Asp-tRNA(Asn) or phospho-Glu-tRNA(Gln). The polypeptide is Aspartyl/glutamyl-tRNA(Asn/Gln) amidotransferase subunit C (Clostridium botulinum (strain ATCC 19397 / Type A)).